The primary structure comprises 677 residues: Envelope glycoprotein (677 aa).

A signal peptide spans 1–33; that stretch reads MGSGYQLLQLPRERFRKTSFLVWVIILFQRAIS. The Extracellular segment spans residues 34–651; it reads MPLGIVTNST…DLNLWTGWRQ (618 aa). The N-linked (GlcNAc...) asparagine; by host glycan is linked to Asn-41. Cystine bridges form between Cys-54/Cys-610, Cys-109/Cys-136, Cys-122/Cys-148, Cys-512/Cys-557, and Cys-602/Cys-609. The tract at residues 55 to 202 is receptor-binding; that stretch reads RDKLSSTSQL…HFWKATPAHE (148 aa). Residues Asn-205, Asn-239, Asn-258, Asn-269, Asn-297, Asn-317, Asn-318, Asn-339, Asn-406, Asn-420, Asn-435, and Asn-463 are each glycosylated (N-linked (GlcNAc...) asparagine; by host). The segment at 306–486 is mucin-like region; that stretch reads NLHFQILSTH…PSQPGFTINT (181 aa). Polar residues predominate over residues 315–326; it reads HTNNSSDQSPAG. Disordered stretches follow at residues 315 to 349, 370 to 482, and 489 to 508; these read HTNN…TDSP, NGET…QPGF, and KVAD…RQNT. Composition is skewed to polar residues over residues 370-421 and 429-472; these read NGET…ASNE and NPIQ…TSPG. Residues 525–540 are fusion peptide; it reads GAAVGLAWIPYFGPAA. The stretch at 555–596 forms a coiled coil; the sequence is LICGLRQLANETTQALQLFLRATTELRTYSLLNRKAIDFLLQ. Asn-564 carries N-linked (GlcNAc...) asparagine; by host glycosylation. Residues 616–635 adopt a coiled-coil conformation; that stretch reads WTKNITDEINQIKHDFIDNP. An N-linked (GlcNAc...) asparagine; by host glycan is attached at Asn-619. The helical transmembrane segment at 652–672 threads the bilayer; it reads WIPAGIGIIGVIIAIIALLCI. S-palmitoyl cysteine; by host attachment occurs at residues Cys-671 and Cys-673. Topologically, residues 673 to 677 are cytoplasmic; the sequence is CKILC.

This sequence belongs to the filoviruses glycoprotein family. As to quaternary structure, homotrimer; each monomer consists of a GP1 and a GP2 subunit linked by disulfide bonds. The resulting peplomers (GP1,2) protrude from the virus surface as spikes. Interacts with host integrin alpha-V/ITGAV. Interacts with host CLEC10A. Binds also to host CD209 and CLEC4M/DC-SIGN(R). Interacts with host FOLR1. Interacts with BST2; this interaction inhibits the antiviral effect of BST2 and this allows viral release from infected cells. Interacts with host FCN1; this interaction enhances viral entry. Interacts with host TLR4; this interaction induces cell death in T-lymphocytes or proinflammatory cytokines and SOCS1 production in monocytes. In terms of assembly, interacts with host entry receptor NPC1. GP1 and GP2delta are part of GP1,2delta soluble complexes released by ectodomain shedding. In terms of processing, the signal peptide region modulates GP's high mannose glycosylation, thereby determining the efficiency of the interactions with DC-SIGN(R). N-glycosylated. Post-translationally, O-glycosylated in the mucin-like region. In terms of processing, palmitoylation of GP2 is not required for its function. Specific enzymatic cleavages in vivo yield mature proteins. The precursor is processed into GP1 and GP2 by host cell furin in the trans Golgi, and maybe by other host proteases, to yield the mature GP1 and GP2 proteins. The cleavage site corresponds to the furin optimal cleavage sequence [KR]-X-[KR]-R. This cleavage does not seem to be required for function. After the internalization of the virus into cell endosomes, GP1 C-terminus is removed by the endosomal proteases cathepsin B, cathepsin L, or both, leaving a 19-kDa N-terminal fragment which is further digested by cathepsin B. Proteolytic processing of GP1,2 by host ADAM17 can remove the transmembrane anchor of GP2 and leads to shedding of complexes consisting in GP1 and truncated GP2 (GP1,2delta).

The protein localises to the virion membrane. It localises to the host cell membrane. The protein resides in the secreted. In terms of biological role, trimeric GP1,2 complexes form the virion surface spikes and mediate the viral entry processes, with GP1 acting as the receptor-binding subunit and GP2 as the membrane fusion subunit. At later times of infection, down-regulates the expression of various host cell surface molecules that are essential for immune surveillance and cell adhesion. Down-modulates several integrins including ITGA1, ITGA2, ITGA3, ITGA4, ITGA5, ITGA6, ITGAV and ITGB1. This decrease in cell adhesion molecules may lead to cell detachment, contributing to the disruption of blood vessel integrity and hemorrhages developed during infection (cytotoxicity). Interacts with host TLR4 and thereby stimulates the differentiation and activation of monocytes leading to bystander death of T-lymphocytes. Down-regulates as well the function of host natural killer cells. Counteracts the antiviral effect of host BST2/tetherin that restricts release of progeny virions from infected cells. However, cooperates with VP40 and host BST2 to activate canonical NF-kappa-B pathway in a manner dependent on neddylation. Functionally, functions as a decoy for anti-GP1,2 antibodies thereby contributing to viral immune evasion. Interacts and activates host macrophages and dendritic cells inducing up-regulation of cytokine transcription. This effect is mediated throught activation of host TLR4. Its function is as follows. Responsible for binding to the receptor(s) on target cells. Interacts with CD209/DC-SIGN and CLEC4M/DC-SIGNR which act as cofactors for virus entry into dendritic cells (DCs) and endothelial cells. Binding to the macrophage specific lectin CLEC10A also seems to enhance virus infectivity. Interaction with FOLR1/folate receptor alpha may be a cofactor for virus entry in some cell types, although results are contradictory. Members of the Tyro3 receptor tyrosine kinase family also seem to be cell entry factors in filovirus infection. Once attached, the virions are internalized through clathrin-dependent endocytosis and/or macropinocytosis. After internalization of the virus into the endosomes of the host cell, proteolysis of GP1 by two cysteine proteases, CTSB/cathepsin B and CTSL/cathepsin L removes the glycan cap and allows GP1 binding to the host entry receptor NPC1. NPC1-binding, Ca(2+) and acidic pH induce a conformational change of GP2, which unmasks its fusion peptide and permit membranes fusion. Acts as a class I viral fusion protein. Under the current model, the protein has at least 3 conformational states: pre-fusion native state, pre-hairpin intermediate state, and post-fusion hairpin state. During viral and target cell membrane fusion, the coiled coil regions (heptad repeats) assume a trimer-of-hairpins structure, positioning the fusion peptide in close proximity to the C-terminal region of the ectodomain. The formation of this structure appears to drive apposition and subsequent fusion of viral and target cell membranes. Responsible for penetration of the virus into the cell cytoplasm by mediating the fusion of the membrane of the endocytosed virus particle with the endosomal membrane. Low pH in endosomes induces an irreversible conformational change in GP2, releasing the fusion hydrophobic peptide. This chain is Envelope glycoprotein (GP), found in Homo sapiens (Human).